A 266-amino-acid polypeptide reads, in one-letter code: Glucosamine-6-phosphate deaminase (266 aa).

Asp-72 serves as the catalytic Proton acceptor; for enolization step. Residue Asp-141 is the For ring-opening step of the active site. The Proton acceptor; for ring-opening step role is filled by His-143. Glu-148 functions as the For ring-opening step in the catalytic mechanism.

It belongs to the glucosamine/galactosamine-6-phosphate isomerase family. NagB subfamily. As to quaternary structure, homohexamer.

It catalyses the reaction alpha-D-glucosamine 6-phosphate + H2O = beta-D-fructose 6-phosphate + NH4(+). The protein operates within amino-sugar metabolism; N-acetylneuraminate degradation; D-fructose 6-phosphate from N-acetylneuraminate: step 5/5. Allosterically activated by N-acetylglucosamine 6-phosphate (GlcNAc6P). Functionally, catalyzes the reversible isomerization-deamination of glucosamine 6-phosphate (GlcN6P) to form fructose 6-phosphate (Fru6P) and ammonium ion. The sequence is that of Glucosamine-6-phosphate deaminase from Aeromonas salmonicida (strain A449).